Here is a 202-residue protein sequence, read N- to C-terminus: Stress enhanced protein 2, chloroplastic (202 aa).

The transit peptide at M1–Y60 directs the protein to the chloroplast. 2 consecutive transmembrane segments (helical) span residues L111–F131 and A142–S162.

This sequence belongs to the ELIP/psbS family.

The protein localises to the plastid. It is found in the chloroplast thylakoid membrane. Its function is as follows. May be involved in non-photochemical quenching, a process that maintains the balance between dissipation and utilization of light energy to minimize generation of oxidizing molecules, thereby protecting the plant against photo-oxidative damage. May play a photoprotective role in the thylakoid membrane in response to light stress. The chain is Stress enhanced protein 2, chloroplastic from Arabidopsis thaliana (Mouse-ear cress).